A 123-amino-acid chain; its full sequence is Small ribosomal subunit protein uS12cz/uS12cy (123 aa).

It belongs to the universal ribosomal protein uS12 family. In terms of assembly, part of the 30S ribosomal subunit.

The protein resides in the plastid. The protein localises to the chloroplast. In terms of biological role, with S4 and S5 plays an important role in translational accuracy. Located at the interface of the 30S and 50S subunits. In Drimys granadensis, this protein is Small ribosomal subunit protein uS12cz/uS12cy (rps12-A).